The primary structure comprises 130 residues: Holo-[acyl-carrier-protein] synthase (130 aa).

Mg(2+)-binding residues include D9 and E58.

The protein belongs to the P-Pant transferase superfamily. AcpS family. Mg(2+) is required as a cofactor.

Its subcellular location is the cytoplasm. It catalyses the reaction apo-[ACP] + CoA = holo-[ACP] + adenosine 3',5'-bisphosphate + H(+). Its function is as follows. Transfers the 4'-phosphopantetheine moiety from coenzyme A to a Ser of acyl-carrier-protein. This chain is Holo-[acyl-carrier-protein] synthase, found in Mycobacterium sp. (strain JLS).